The chain runs to 175 residues: Methylated-DNA--protein-cysteine methyltransferase (175 aa).

DNA-binding residues include Y115 and R127. C144 functions as the Nucleophile; methyl group acceptor in the catalytic mechanism.

The protein belongs to the MGMT family.

Its subcellular location is the nucleus. The enzyme catalyses a 6-O-methyl-2'-deoxyguanosine in DNA + L-cysteinyl-[protein] = S-methyl-L-cysteinyl-[protein] + a 2'-deoxyguanosine in DNA. It catalyses the reaction a 4-O-methyl-thymidine in DNA + L-cysteinyl-[protein] = a thymidine in DNA + S-methyl-L-cysteinyl-[protein]. Its function is as follows. Involved in the cellular defense against the biological effects of O6-methylguanine (O6-MeG) and O4-methylthymine (O4-MeT) in DNA. Repairs the methylated nucleobase in DNA by stoichiometrically transferring the methyl group to a cysteine residue in the enzyme. This is a suicide reaction: the enzyme is irreversibly inactivated. This is Methylated-DNA--protein-cysteine methyltransferase (MGT1) from Candida albicans (strain SC5314 / ATCC MYA-2876) (Yeast).